We begin with the raw amino-acid sequence, 350 residues long: MKFIDEAKITVLAGKGGDGSASFRREKYIPKGGPDGGDGGRGGSVYAVADRNVNTLVEFRYTRIFKAQKGENGRGAQCYGKAGDDLTIRVPVGTVFSDVNSGEVVADLAEDGETVCLAKGGKGGLGNIHFKSSTNRAPRQHTLGEPGEEWELALELKVLADVGLLGMPNAGKSTFIRAVSAARPKVADYPFTTLAPNLGVVRVDSERSFVIADIPGLIEGAAEGAGLGHQFLRHLQRTRLLLHLVDISPRWEAGDPVHEARAIVEELRKYDQALYEKPRWLVLNKLDMVDEGEREAVVAKFVEDYGWNGPVFAISALDGSGCSALTYAVMDYLGMLAPRHEAEDPAPPAS.

Residues 1-159 (MKFIDEAKIT…WELALELKVL (159 aa)) form the Obg domain. Positions 17 to 43 (GDGSASFRREKYIPKGGPDGGDGGRGG) are disordered. Positions 33-43 (GPDGGDGGRGG) are enriched in gly residues. The 175-residue stretch at 160–334 (ADVGLLGMPN…LTYAVMDYLG (175 aa)) folds into the OBG-type G domain. GTP is bound by residues 166–173 (GMPNAGKS), 191–195 (FTTLA), 213–216 (DIPG), 284–287 (NKLD), and 315–317 (SAL). 2 residues coordinate Mg(2+): serine 173 and threonine 193.

It belongs to the TRAFAC class OBG-HflX-like GTPase superfamily. OBG GTPase family. Monomer. Requires Mg(2+) as cofactor.

It is found in the cytoplasm. Its function is as follows. An essential GTPase which binds GTP, GDP and possibly (p)ppGpp with moderate affinity, with high nucleotide exchange rates and a fairly low GTP hydrolysis rate. Plays a role in control of the cell cycle, stress response, ribosome biogenesis and in those bacteria that undergo differentiation, in morphogenesis control. The sequence is that of GTPase Obg from Thiobacillus denitrificans (strain ATCC 25259 / T1).